The following is a 677-amino-acid chain: Methionine--tRNA ligase (677 aa).

The short motif at 15 to 25 is the 'HIGH' region element; sequence PYANGSIHLGH. C146, C149, C159, and C162 together coordinate Zn(2+). A 'KMSKS' region motif is present at residues 333–337; sequence KMSKS. ATP is bound at residue K336. The 103-residue stretch at 575–677 folds into the tRNA-binding domain; the sequence is DFAKVDLRVA…AGAKPGHQVK (103 aa).

Belongs to the class-I aminoacyl-tRNA synthetase family. MetG type 1 subfamily. As to quaternary structure, homodimer. It depends on Zn(2+) as a cofactor.

It is found in the cytoplasm. It carries out the reaction tRNA(Met) + L-methionine + ATP = L-methionyl-tRNA(Met) + AMP + diphosphate. In terms of biological role, is required not only for elongation of protein synthesis but also for the initiation of all mRNA translation through initiator tRNA(fMet) aminoacylation. The polypeptide is Methionine--tRNA ligase (Escherichia coli O81 (strain ED1a)).